The chain runs to 871 residues: DNA mismatch repair protein MutS 1 (871 aa).

614-621 (GPNMSGKS) provides a ligand contact to ATP.

Belongs to the DNA mismatch repair MutS family.

Its function is as follows. This protein is involved in the repair of mismatches in DNA. It is possible that it carries out the mismatch recognition step. This protein has a weak ATPase activity. In Halobacterium salinarum (strain ATCC 29341 / DSM 671 / R1), this protein is DNA mismatch repair protein MutS 1.